We begin with the raw amino-acid sequence, 305 residues long: tRNA uridine(34) hydroxylase (305 aa).

The 96-residue stretch at 124–219 folds into the Rhodanese domain; it reads QDEETLVVDT…YLETIPKEES (96 aa). Cys179 serves as the catalytic Cysteine persulfide intermediate.

The protein belongs to the TrhO family.

The enzyme catalyses uridine(34) in tRNA + AH2 + O2 = 5-hydroxyuridine(34) in tRNA + A + H2O. In terms of biological role, catalyzes oxygen-dependent 5-hydroxyuridine (ho5U) modification at position 34 in tRNAs. The polypeptide is tRNA uridine(34) hydroxylase (Bartonella bacilliformis (strain ATCC 35685 / KC583 / Herrer 020/F12,63)).